The primary structure comprises 97 residues: HssA/B-like protein 47 (97 aa).

The tract at residues 1 to 33 is disordered; sequence MTLFSSISSISNPMTSSKSSIASFGSGTSMSSN.

The protein belongs to the hssA/B family.

The sequence is that of HssA/B-like protein 47 (hssl47) from Dictyostelium discoideum (Social amoeba).